Consider the following 264-residue polypeptide: Thiazole synthase (264 aa).

The active-site Schiff-base intermediate with DXP is the Lys106. 1-deoxy-D-xylulose 5-phosphate-binding positions include Gly167, 193–194, and 215–216; these read AG and NT.

Belongs to the ThiG family. Homotetramer. Forms heterodimers with either ThiH or ThiS.

The protein localises to the cytoplasm. It carries out the reaction [ThiS sulfur-carrier protein]-C-terminal-Gly-aminoethanethioate + 2-iminoacetate + 1-deoxy-D-xylulose 5-phosphate = [ThiS sulfur-carrier protein]-C-terminal Gly-Gly + 2-[(2R,5Z)-2-carboxy-4-methylthiazol-5(2H)-ylidene]ethyl phosphate + 2 H2O + H(+). It functions in the pathway cofactor biosynthesis; thiamine diphosphate biosynthesis. Catalyzes the rearrangement of 1-deoxy-D-xylulose 5-phosphate (DXP) to produce the thiazole phosphate moiety of thiamine. Sulfur is provided by the thiocarboxylate moiety of the carrier protein ThiS. In vitro, sulfur can be provided by H(2)S. In Xylella fastidiosa (strain 9a5c), this protein is Thiazole synthase.